The sequence spans 218 residues: MTQKVVVIYSGGMDSFTVLNKALQQGHDVYALSFDYGQRHVKELKVAAQVCKQLNVPHKIVDISAINQIIGGSSLTDDIDVPEGHYEEDSMKSTIVPNRNMILLSLAVGYAVSLKASQVYYGAHSGDHAIYPDCRPEFVQKMDDVCRIANYDAVEIFSPYLNNTKIDILTDGIAMGLDYSQTWTCYNGREKACGKCGACQERLEAFEVNNLTDPLEYE.

9–19 serves as a coordination point for ATP; sequence YSGGMDSFTVL. Cys185, Cys193, Cys196, and Cys199 together coordinate Zn(2+).

Belongs to the QueC family. It depends on Zn(2+) as a cofactor.

It catalyses the reaction 7-carboxy-7-deazaguanine + NH4(+) + ATP = 7-cyano-7-deazaguanine + ADP + phosphate + H2O + H(+). Its pathway is purine metabolism; 7-cyano-7-deazaguanine biosynthesis. Its function is as follows. Catalyzes the ATP-dependent conversion of 7-carboxy-7-deazaguanine (CDG) to 7-cyano-7-deazaguanine (preQ(0)). This chain is 7-cyano-7-deazaguanine synthase, found in Pseudoalteromonas translucida (strain TAC 125).